The sequence spans 160 residues: Transcriptional repressor NrdR (160 aa).

Polar residues predominate over residues 1–11 (MRCPSCNSLDT). Residues 1 to 20 (MRCPSCNSLDTQVKDSRPTE) are disordered. A zinc finger spans residues 3–34 (CPSCNSLDTQVKDSRPTEDSAVIRRRRVCMAC). The ATP-cone domain maps to 49-139 (LTVIKRNGRR…VYRNFREAKD (91 aa)).

The protein belongs to the NrdR family. The cofactor is Zn(2+).

In terms of biological role, negatively regulates transcription of bacterial ribonucleotide reductase nrd genes and operons by binding to NrdR-boxes. This is Transcriptional repressor NrdR from Nitrobacter winogradskyi (strain ATCC 25391 / DSM 10237 / CIP 104748 / NCIMB 11846 / Nb-255).